Here is a 962-residue protein sequence, read N- to C-terminus: Voltage-gated delayed rectifier potassium channel KCNH1 (962 aa).

At 1-220 (MTMAGGRRGL…LHYCVFKTTW (220 aa)) the chain is on the cytoplasmic side. One can recognise a PAS domain in the interval 14-94 (QNTFLENIVR…QTFENYEMNS (81 aa)). Residues 93–145 (NSFEILMYKKNRTPVWFFVKIAPIRNEQDKVVLFLCTFSDITAFKQPIEDDSC) form the PAC domain. The required for phosphatidylinositol bisphosphate binding stretch occupies residues 151–162 (FARLTRALTSSR). Residues 221 to 241 (DWIILILTFYTAILVPYNVSF) form a helical membrane-spanning segment. The Extracellular portion of the chain corresponds to 242–248 (KTRQNNV). A helical membrane pass occupies residues 249-269 (AWLVVDSIVDVIFLVDIVLNF). Over 270–290 (HTTFVGPAGEVISDPKLIRMN) the chain is Cytoplasmic. A helical transmembrane segment spans residues 291–309 (YLKTWFVIDLLSCLPYDVI). Residues 310 to 318 (NAFENVDEG) lie on the Extracellular side of the membrane. The chain crosses the membrane as a helical; Voltage-sensor span at residues 319 to 341 (ISSLFSSLKVVRLLRLGRVARKL). Residues 342-350 (DHYIEYGAA) lie on the Cytoplasmic side of the membrane. A helical membrane pass occupies residues 351-372 (VLVLLVCVFGLAAHWMACIWYS). Residues 373 to 421 (IGDYEIFDEDTKTIRNNSWLYQLALDIGTPYQFNGSGSGKWEGGPSKNS) lie on the Extracellular side of the membrane. 2 N-linked (GlcNAc...) asparagine glycosylation sites follow: asparagine 388 and asparagine 406. Residues 422–443 (VYISSLYFTMTSLTSVGFGNIA) constitute an intramembrane region (pore-forming). Residues 436–441 (SVGFGN) carry the Selectivity filter motif. Residues 444–450 (PSTDIEK) lie on the Extracellular side of the membrane. The chain crosses the membrane as a helical span at residues 451–471 (IFAVAIMMIGSLLYATIFGNV). At 472-962 (TTIFQQMYAN…ESDRDIFGAS (491 aa)) the chain is on the cytoplasmic side. Residues 646–743 (KRDALQKVLE…LDDLDVEKGN (98 aa)) form a calmodulin-binding region. An interaction with cyclic nucleotide-binding pocket region spans residues 672–674 (YNL). A compositionally biased stretch (basic and acidic residues) spans 830–852 (ESMETLPERTKASGEATLKKTDS). Disordered stretches follow at residues 830–859 (ESMETLPERTKASGEATLKKTDSCDSGITK) and 933–962 (SRGSSQSPQDTCEVSRPQSPESDRDIFGAS). Residues 897–937 (ATVLEVKHELKEDIKALNAKMTSIEKQLSEILRILMSRGSS) form a CAD (involved in subunit assembly) region. The span at 934 to 952 (RGSSQSPQDTCEVSRPQSP) shows a compositional bias: polar residues. Residues serine 947, serine 951, and serine 954 each carry the phosphoserine modification. Residues 953-962 (ESDRDIFGAS) show a composition bias toward basic and acidic residues.

This sequence belongs to the potassium channel family. H (Eag) (TC 1.A.1.20) subfamily. Kv10.1/KCNH1 sub-subfamily. Homomultimer. The potassium channel is composed of a homo- or heterotetrameric complex of pore-forming alpha subunits that can associate with modulating beta subunits. Heteromultimer with KCNH5/EAG2. Interacts with ALG10B. Interacts with RABEP1. Interacts (via C-terminus) with CTTN. Interacts (via cytoplasmic region) with Ca(2+)-bound calmodulin. Post-translationally, channel activity is regulated via tyrosine phosphorylation/dephosphorylation by SRC and PTPN6. Detected in cerebellum, at parallel fiber synapses on Purkinje cell spines. Detected in hippocampus neurons (at protein level). Detected in brain, but not in the other tissues tested; expression is highest in granular cells of the dentate gyrus, in hippocampus CA3 pyramidal cells, and in cerebellar granule cells. Detected in pituitary.

The protein resides in the cell membrane. It localises to the nucleus inner membrane. The protein localises to the cell projection. It is found in the dendrite. Its subcellular location is the axon. The protein resides in the presynaptic cell membrane. It localises to the perikaryon. The protein localises to the postsynaptic density membrane. It is found in the early endosome membrane. The catalysed reaction is K(+)(in) = K(+)(out). Its activity is regulated as follows. Channel activity is inhibited by interaction with Ca(2+)-bound calmodulin. Interaction of a single pore-forming alpha subunit with a calmodulin chain is sufficient to promote channel closure. Channel activity is not regulated by cyclic nucleotides. Channel activity is inhibited by binding intracellular phosphatidylinositol-3,5-bisphosphate and phosphatidylinositol-4,5-bisphosphate (PIP2), but is not inhibited by phosphatidylinositol 4-phosphate. Pore-forming (alpha) subunit of a voltage-gated delayed rectifier potassium channel that mediates outward-rectifying potassium currents which, on depolarization, reaches a steady-state level and do not inactivate. The activation kinetics depend on the prepulse potential and external divalent cation concentration. With negative prepulses, the current activation is delayed and slowed down several fold, whereas more positive prepulses speed up activation. The time course of activation is biphasic with a fast and a slowly activating current component. Activates at more positive membrane potentials and exhibit a steeper activation curve. Channel properties are modulated by subunit assembly. Mediates IK(NI) current in myoblasts. Involved in the regulation of cell proliferation and differentiation, in particular adipogenic and osteogenic differentiation in bone marrow-derived mesenchymal stem cells (MSCs). This is Voltage-gated delayed rectifier potassium channel KCNH1 from Rattus norvegicus (Rat).